The chain runs to 284 residues: Kynurenine formamidase avaC (284 aa).

Residues 47 to 51 (HGGGW) carry the HGGXW motif. Residue serine 130 is the Nucleophile of the active site.

It belongs to the kynurenine formamidase family.

It catalyses the reaction N-formyl-L-kynurenine + H2O = L-kynurenine + formate + H(+). Its pathway is secondary metabolite metabolism. In terms of biological role, kynurenine formamidase; part of the cluster that mediates the biosynthesis of a highly modified cyclo-arginine-tryptophan dipeptide (cRW). Within the pathway, avaC catalyzes the deformylation of the cyclo-Arg-formylkynurenine iketopiperazine (DKP), produced by the FAD-dependent monooxygenase avaB. The first step of the pathway is perfornmed by the arginine-containing cyclodipeptide synthase (RCPDS) avaA that acts as the scaffold-generating enzyme and is responsible for formation of the cyclo-Arg-Trp (cRW) diketopiperazine. AvaB then acts as a multifunctional flavoenzyme that is responsible for generating the cyclo-Arg-formylkynurenine DKP, which can be deformylated by avaC. AvaB then further catalyzes an additional N-oxidation followed by cyclization and dehydration. The next step is an N-acetylation of the guanidine group catalyzed by the arginine N-acetyltransferase avaD. The roles of the additional enzymes identified within the ava cluster still have to be determined. This Aspergillus versicolor protein is Kynurenine formamidase avaC.